The sequence spans 156 residues: Small ribosomal subunit protein uS7 (156 aa).

Belongs to the universal ribosomal protein uS7 family. In terms of assembly, part of the 30S ribosomal subunit. Contacts proteins S9 and S11.

In terms of biological role, one of the primary rRNA binding proteins, it binds directly to 16S rRNA where it nucleates assembly of the head domain of the 30S subunit. Is located at the subunit interface close to the decoding center, probably blocks exit of the E-site tRNA. The chain is Small ribosomal subunit protein uS7 from Pectobacterium atrosepticum (strain SCRI 1043 / ATCC BAA-672) (Erwinia carotovora subsp. atroseptica).